Reading from the N-terminus, the 308-residue chain is Elongation factor Ts (308 aa).

The tract at residues 80 to 83 is involved in Mg(2+) ion dislocation from EF-Tu; it reads TDFV.

The protein belongs to the EF-Ts family.

Its subcellular location is the cytoplasm. In terms of biological role, associates with the EF-Tu.GDP complex and induces the exchange of GDP to GTP. It remains bound to the aminoacyl-tRNA.EF-Tu.GTP complex up to the GTP hydrolysis stage on the ribosome. This is Elongation factor Ts from Rhodopseudomonas palustris (strain ATCC BAA-98 / CGA009).